A 289-amino-acid chain; its full sequence is Phosphate import ATP-binding protein PstB 2 (289 aa).

The ABC transporter domain occupies 37 to 276; it reads LHAKVEAFYY…HTPVIFQNPT (240 aa). Residue 69–76 participates in ATP binding; that stretch reads GPSGCGKS.

Belongs to the ABC transporter superfamily. Phosphate importer (TC 3.A.1.7) family. The complex is composed of two ATP-binding proteins (PstB), two transmembrane proteins (PstC and PstA) and a solute-binding protein (PstS).

The protein localises to the cell inner membrane. The catalysed reaction is phosphate(out) + ATP + H2O = ADP + 2 phosphate(in) + H(+). Functionally, part of the ABC transporter complex PstSACB involved in phosphate import. Responsible for energy coupling to the transport system. The chain is Phosphate import ATP-binding protein PstB 2 from Trichormus variabilis (strain ATCC 29413 / PCC 7937) (Anabaena variabilis).